The sequence spans 224 residues: Pyridoxal 5'-phosphate synthase subunit PdxT (224 aa).

Position 55 to 57 (55 to 57 (GES)) interacts with L-glutamine. The active-site Nucleophile is cysteine 87. Residues arginine 113 and 142–143 (IR) contribute to the L-glutamine site. Catalysis depends on charge relay system residues histidine 178 and glutamate 180.

This sequence belongs to the glutaminase PdxT/SNO family. As to quaternary structure, in the presence of PdxS, forms a dodecamer of heterodimers. Only shows activity in the heterodimer.

The catalysed reaction is aldehydo-D-ribose 5-phosphate + D-glyceraldehyde 3-phosphate + L-glutamine = pyridoxal 5'-phosphate + L-glutamate + phosphate + 3 H2O + H(+). The enzyme catalyses L-glutamine + H2O = L-glutamate + NH4(+). It participates in cofactor biosynthesis; pyridoxal 5'-phosphate biosynthesis. Functionally, catalyzes the hydrolysis of glutamine to glutamate and ammonia as part of the biosynthesis of pyridoxal 5'-phosphate. The resulting ammonia molecule is channeled to the active site of PdxS. In Syntrophus aciditrophicus (strain SB), this protein is Pyridoxal 5'-phosphate synthase subunit PdxT.